We begin with the raw amino-acid sequence, 37 residues long: Protein YhiY (37 aa).

This chain is Protein YhiY, found in Escherichia coli (strain K12).